Reading from the N-terminus, the 103-residue chain is Histone H4 variant TH091 (103 aa).

Positions 1 to 20 (MSGRDKGGKGLGKGGAKRHR) are disordered. S2 is subject to N-acetylserine. 5 positions are modified to N6-acetyllysine: K6, K9, K13, K17, and K21. Residues 17–21 (KRHRK) mediate DNA binding.

Belongs to the histone H4 family. As to quaternary structure, the nucleosome is a histone octamer containing two molecules each of H2A, H2B, H3 and H4 assembled in one H3-H4 heterotetramer and two H2A-H2B heterodimers. The octamer wraps approximately 147 bp of DNA.

It is found in the nucleus. Its subcellular location is the chromosome. Core component of nucleosome. Nucleosomes wrap and compact DNA into chromatin, limiting DNA accessibility to the cellular machineries which require DNA as a template. Histones thereby play a central role in transcription regulation, DNA repair, DNA replication and chromosomal stability. DNA accessibility is regulated via a complex set of post-translational modifications of histones, also called histone code, and nucleosome remodeling. This Triticum aestivum (Wheat) protein is Histone H4 variant TH091.